The chain runs to 385 residues: MEDALGQLAVLVLEDGTRFHGRSIGAKGTTVGEVVFNTSITGYQEIITDPSYSHQIVTLTHPHIGNIGTNCNDEESSKIHIRGLIIRDMSPISSNYRSEKSFSSYLKENNIVAISDIDTRKLTRILRTKGSQNGCIIEDKKENYSVAYQKAKKFLSLQGLDLAKKVSTKFIYNWDKGSFFINKSKSKLEKKKKFLFHIVVYDFGVKRNILRMLVDRGCYLTVVPAKTDPKIALNLNPDGIFLSNGPGDPRPCDYAIHAIQCFLKKNIPIFGICLGHQLLALASGANIIKMKFGHHGGNHPVKEIKTNRVIITSQNHSFTVDAKNMPNNIAITHSSLFDGTLQGLCLTDKLAFSFQGHPEASPGPHDASSLFDHFIKLLNQVKFSN.

Positions 1 to 196 are CPSase; that stretch reads MEDALGQLAV…KLEKKKKFLF (196 aa). 3 residues coordinate L-glutamine: Ser-51, Gly-245, and Gly-247. Residues 197 to 384 form the Glutamine amidotransferase type-1 domain; that stretch reads HIVVYDFGVK…IKLLNQVKFS (188 aa). Residue Cys-273 is the Nucleophile of the active site. 4 residues coordinate L-glutamine: Leu-274, Gln-277, Asn-315, and Phe-318. Active-site residues include His-357 and Glu-359.

The protein belongs to the CarA family. In terms of assembly, composed of two chains; the small (or glutamine) chain promotes the hydrolysis of glutamine to ammonia, which is used by the large (or ammonia) chain to synthesize carbamoyl phosphate. Tetramer of heterodimers (alpha,beta)4.

The enzyme catalyses hydrogencarbonate + L-glutamine + 2 ATP + H2O = carbamoyl phosphate + L-glutamate + 2 ADP + phosphate + 2 H(+). It catalyses the reaction L-glutamine + H2O = L-glutamate + NH4(+). The protein operates within amino-acid biosynthesis; L-arginine biosynthesis; carbamoyl phosphate from bicarbonate: step 1/1. Its pathway is pyrimidine metabolism; UMP biosynthesis via de novo pathway; (S)-dihydroorotate from bicarbonate: step 1/3. Its function is as follows. Small subunit of the glutamine-dependent carbamoyl phosphate synthetase (CPSase). CPSase catalyzes the formation of carbamoyl phosphate from the ammonia moiety of glutamine, carbonate, and phosphate donated by ATP, constituting the first step of 2 biosynthetic pathways, one leading to arginine and/or urea and the other to pyrimidine nucleotides. The small subunit (glutamine amidotransferase) binds and cleaves glutamine to supply the large subunit with the substrate ammonia. The polypeptide is Carbamoyl phosphate synthase small chain (Buchnera aphidicola subsp. Schizaphis graminum (strain Sg)).